An 81-amino-acid polypeptide reads, in one-letter code: Acyl carrier protein (81 aa).

Residues 2 to 80 (ASEQEILSGL…DAVAYISQAQ (79 aa)) enclose the Carrier domain. The residue at position 40 (serine 40) is an O-(pantetheine 4'-phosphoryl)serine.

This sequence belongs to the acyl carrier protein (ACP) family. Post-translationally, 4'-phosphopantetheine is transferred from CoA to a specific serine of apo-ACP by AcpS. This modification is essential for activity because fatty acids are bound in thioester linkage to the sulfhydryl of the prosthetic group.

It localises to the cytoplasm. Its pathway is lipid metabolism; fatty acid biosynthesis. Functionally, carrier of the growing fatty acid chain in fatty acid biosynthesis. The polypeptide is Acyl carrier protein (Kineococcus radiotolerans (strain ATCC BAA-149 / DSM 14245 / SRS30216)).